A 65-amino-acid polypeptide reads, in one-letter code: Cytochrome b-c1 complex subunit 9, mitochondrial (65 aa).

A helical transmembrane segment spans residues 14–34; it reads IYVATIFGGAFAFQGFFDVAV.

Belongs to the UQCR10/QCR9 family. As to quaternary structure, component of the ubiquinol-cytochrome c oxidoreductase (cytochrome b-c1 complex, complex III, CIII), a multisubunit enzyme composed of 10 subunits. The complex is composed of 3 respiratory subunits cytochrome b (COB), cytochrome c1 (CYT1) and Rieske protein (RIP1), 2 core protein subunits COR1 and QCR2, and 5 low-molecular weight protein subunits QCR6, QCR7, QCR8, QCR9 and QCR10. The complex exists as an obligatory dimer and forms supercomplexes (SCs) in the inner mitochondrial membrane with a monomer or a dimer of cytochrome c oxidase (complex IV, CIV), resulting in 2 different assemblies (supercomplexes III(2)IV and III(2)IV(2)).

It localises to the membrane. It is found in the mitochondrion inner membrane. In terms of biological role, component of the ubiquinol-cytochrome c oxidoreductase, a multisubunit transmembrane complex that is part of the mitochondrial electron transport chain which drives oxidative phosphorylation. The complex plays an important role in the uptake of multiple carbon sources present in different host niches. This chain is Cytochrome b-c1 complex subunit 9, mitochondrial, found in Candida albicans (strain SC5314 / ATCC MYA-2876) (Yeast).